A 140-amino-acid chain; its full sequence is Nucleoside diphosphate kinase (140 aa).

Residues lysine 11, phenylalanine 59, arginine 87, threonine 93, arginine 104, and asparagine 114 each contribute to the ATP site. The Pros-phosphohistidine intermediate role is filled by histidine 117.

This sequence belongs to the NDK family. In terms of assembly, homotetramer. Mg(2+) is required as a cofactor.

It localises to the cytoplasm. The catalysed reaction is a 2'-deoxyribonucleoside 5'-diphosphate + ATP = a 2'-deoxyribonucleoside 5'-triphosphate + ADP. The enzyme catalyses a ribonucleoside 5'-diphosphate + ATP = a ribonucleoside 5'-triphosphate + ADP. Major role in the synthesis of nucleoside triphosphates other than ATP. The ATP gamma phosphate is transferred to the NDP beta phosphate via a ping-pong mechanism, using a phosphorylated active-site intermediate. In Cereibacter sphaeroides (strain ATCC 17029 / ATH 2.4.9) (Rhodobacter sphaeroides), this protein is Nucleoside diphosphate kinase.